The chain runs to 71 residues: uncharacterized protein (71 aa).

This is an uncharacterized protein from Vaccinia virus (strain Copenhagen) (VACV).